The sequence spans 95 residues: Aspartyl/glutamyl-tRNA(Asn/Gln) amidotransferase subunit C (95 aa).

It belongs to the GatC family. Heterotrimer of A, B and C subunits.

It carries out the reaction L-glutamyl-tRNA(Gln) + L-glutamine + ATP + H2O = L-glutaminyl-tRNA(Gln) + L-glutamate + ADP + phosphate + H(+). The enzyme catalyses L-aspartyl-tRNA(Asn) + L-glutamine + ATP + H2O = L-asparaginyl-tRNA(Asn) + L-glutamate + ADP + phosphate + 2 H(+). In terms of biological role, allows the formation of correctly charged Asn-tRNA(Asn) or Gln-tRNA(Gln) through the transamidation of misacylated Asp-tRNA(Asn) or Glu-tRNA(Gln) in organisms which lack either or both of asparaginyl-tRNA or glutaminyl-tRNA synthetases. The reaction takes place in the presence of glutamine and ATP through an activated phospho-Asp-tRNA(Asn) or phospho-Glu-tRNA(Gln). The polypeptide is Aspartyl/glutamyl-tRNA(Asn/Gln) amidotransferase subunit C (Brucella abortus (strain S19)).